The following is a 257-amino-acid chain: Diphthine synthase (257 aa).

S-adenosyl-L-methionine contacts are provided by residues leucine 9, aspartate 83, methionine 86, 111 to 112 (SI), and isoleucine 163.

This sequence belongs to the diphthine synthase family. As to quaternary structure, homodimer.

The enzyme catalyses 2-[(3S)-amino-3-carboxypropyl]-L-histidyl-[translation elongation factor 2] + 3 S-adenosyl-L-methionine = diphthine-[translation elongation factor 2] + 3 S-adenosyl-L-homocysteine + 3 H(+). It functions in the pathway protein modification; peptidyl-diphthamide biosynthesis. S-adenosyl-L-methionine-dependent methyltransferase that catalyzes the trimethylation of the amino group of the modified target histidine residue in translation elongation factor 2 (EF-2), to form an intermediate called diphthine. The three successive methylation reactions represent the second step of diphthamide biosynthesis. This Thermoplasma acidophilum (strain ATCC 25905 / DSM 1728 / JCM 9062 / NBRC 15155 / AMRC-C165) protein is Diphthine synthase.